Here is a 160-residue protein sequence, read N- to C-terminus: Cytochrome c-type biogenesis protein CcmE (160 aa).

At 1 to 8 (MNPRRKKR) the chain is on the cytoplasmic side. Residues 9–29 (LGVVLAILFGLSATIGLIIYA) traverse the membrane as a helical; Signal-anchor for type II membrane protein segment. The Periplasmic portion of the chain corresponds to 30-160 (LNQNMDLFYT…SQEQKQGSDQ (131 aa)). Residues histidine 128 and tyrosine 132 each contribute to the heme site.

The protein belongs to the CcmE/CycJ family.

Its subcellular location is the cell inner membrane. Its function is as follows. Heme chaperone required for the biogenesis of c-type cytochromes. Transiently binds heme delivered by CcmC and transfers the heme to apo-cytochromes in a process facilitated by CcmF and CcmH. The chain is Cytochrome c-type biogenesis protein CcmE from Vibrio cholerae serotype O1 (strain ATCC 39541 / Classical Ogawa 395 / O395).